A 150-amino-acid polypeptide reads, in one-letter code: Large ribosomal subunit protein bL9 (150 aa).

Belongs to the bacterial ribosomal protein bL9 family.

Binds to the 23S rRNA. The chain is Large ribosomal subunit protein bL9 from Latilactobacillus sakei subsp. sakei (strain 23K) (Lactobacillus sakei subsp. sakei).